The primary structure comprises 485 residues: MSFETLNKSFINGKWTGGESGRTEDILNPYDQSVITTASLATGKQLEDAFDIAQKAQKEWAKSTTEDRKAVLQKARGYLHENRDDIIMMIARETGGTIIKSTIELEQTIAILDEAMTYTGELGGVKEVPSDIEGKTNKIYRLPLGVISSISPFNFPMNLSMRSIAPAIALGNSVVHKPDIQTAISGGTIIAKAFEHAGLPAGVLNVMLTDVKEIGDGMLTNPIPRLISFTGSTAVGRHIGEIAGRAFKRMALELGGNNPFAVLSDADVDRAVDAAIFGKFIHQGQICMIINRIIVHQDVYDEFVEKFTARVKQLPYGDQTDPKTVVGPLINERQIEKALEIIEQAKTDGIELAVEGKRVGNVLTPYVFVGADNNSKIAQTELFAPIATIIKAGSDQEAIDMANDTEYGLSSAVFTSDLEKGEKFALQIDSGMTHVNDQSVNDSPNIAFGGNKASGVGRFGNPWVVEEFTVTKWISIQKQYRKYPF.

Position 231-236 (231-236 (GSTAVG)) interacts with NAD(+). Active-site residues include Glu-253 and Cys-287.

Belongs to the aldehyde dehydrogenase family.

It carries out the reaction an aldehyde + NAD(+) + H2O = a carboxylate + NADH + 2 H(+). May contribute to protect cells against stress due to ethanol and related compounds. The protein is Putative aldehyde dehydrogenase AldY (aldY) of Bacillus subtilis (strain 168).